Reading from the N-terminus, the 256-residue chain is Tryptophan synthase alpha chain (256 aa).

Active-site proton acceptor residues include E44 and D55.

Belongs to the TrpA family. Tetramer of two alpha and two beta chains.

It carries out the reaction (1S,2R)-1-C-(indol-3-yl)glycerol 3-phosphate + L-serine = D-glyceraldehyde 3-phosphate + L-tryptophan + H2O. Its pathway is amino-acid biosynthesis; L-tryptophan biosynthesis; L-tryptophan from chorismate: step 5/5. Functionally, the alpha subunit is responsible for the aldol cleavage of indoleglycerol phosphate to indole and glyceraldehyde 3-phosphate. The polypeptide is Tryptophan synthase alpha chain (Coxiella burnetii (strain CbuK_Q154) (Coxiella burnetii (strain Q154))).